Here is a 204-residue protein sequence, read N- to C-terminus: Histidine biosynthesis bifunctional protein HisIE (204 aa).

The phosphoribosyl-AMP cyclohydrolase stretch occupies residues 1-114; sequence MLTEQQINQL…FAPAASDWSF (114 aa). The segment at 115–204 is phosphoribosyl-ATP pyrophosphohydrolase; it reads LYQLEQLLAS…IGRLRERHEK (90 aa).

In the N-terminal section; belongs to the PRA-CH family. The protein in the C-terminal section; belongs to the PRA-PH family.

It localises to the cytoplasm. It catalyses the reaction 1-(5-phospho-beta-D-ribosyl)-ATP + H2O = 1-(5-phospho-beta-D-ribosyl)-5'-AMP + diphosphate + H(+). The enzyme catalyses 1-(5-phospho-beta-D-ribosyl)-5'-AMP + H2O = 1-(5-phospho-beta-D-ribosyl)-5-[(5-phospho-beta-D-ribosylamino)methylideneamino]imidazole-4-carboxamide. It functions in the pathway amino-acid biosynthesis; L-histidine biosynthesis; L-histidine from 5-phospho-alpha-D-ribose 1-diphosphate: step 2/9. It participates in amino-acid biosynthesis; L-histidine biosynthesis; L-histidine from 5-phospho-alpha-D-ribose 1-diphosphate: step 3/9. In Yersinia pestis, this protein is Histidine biosynthesis bifunctional protein HisIE (hisI).